Reading from the N-terminus, the 140-residue chain is Large-conductance mechanosensitive channel (140 aa).

Transmembrane regions (helical) follow at residues 16-36 and 84-104; these read VIDL…VTAL and INTV…VKLI.

Belongs to the MscL family. As to quaternary structure, homopentamer.

The protein resides in the cell inner membrane. Its function is as follows. Channel that opens in response to stretch forces in the membrane lipid bilayer. May participate in the regulation of osmotic pressure changes within the cell. In Xanthomonas oryzae pv. oryzae (strain PXO99A), this protein is Large-conductance mechanosensitive channel.